The primary structure comprises 60 residues: Beta-defensin 11 (60 aa).

The signal sequence occupies residues 1 to 22 (MRLHHLLLALLFLVLSAGSGIS). Disulfide bonds link C27/C56, C34/C49, and C39/C57.

Belongs to the beta-defensin family. As to expression, neutrophilic granules.

It is found in the secreted. Its function is as follows. Has bactericidal activity. Active against E.coli ML35 and S.aureus 502A. This is Beta-defensin 11 (DEFB11) from Bos taurus (Bovine).